The primary structure comprises 986 residues: Ephrin type-B receptor 2 (986 aa).

Residues 1 to 18 form the signal peptide; sequence MAVRRLGAALLLLPLLAA. Residues 19–543 lie on the Extracellular side of the membrane; sequence VEETLMDSTT…QTSIKEKLPL (525 aa). The Eph LBD domain maps to 20-202; the sequence is EETLMDSTTA…FYRKCPRIIQ (183 aa). 2 disulfides stabilise this stretch: Cys-62-Cys-184 and Cys-97-Cys-107. Residues Asn-265, Asn-336, Asn-428, and Asn-482 are each glycosylated (N-linked (GlcNAc...) asparagine). Fibronectin type-III domains follow at residues 324 to 434 and 435 to 530; these read IPSA…TNQA and APSA…TMTE. A helical membrane pass occupies residues 544 to 564; that stretch reads IVGSSAAGLVFLIAVVVIAIV. Topologically, residues 565–986 are cytoplasmic; that stretch reads CNRRGFERAD…QMNQIQSVEV (422 aa). The Protein kinase domain maps to 621-884; the sequence is VKIEQVIGAG…QIVNTLDKMI (264 aa). ATP contacts are provided by residues 627-635 and Lys-653; that span reads IGAGEFGEV. The active-site Proton acceptor is the Asp-746. A Glycyl lysine isopeptide (Lys-Gly) (interchain with G-Cter in ubiquitin) cross-link involves residue Lys-891. An SAM domain is found at 913–977; that stretch reads TSFNTVDEWL…LNSIQVMRAQ (65 aa). The PDZ-binding motif lies at 984 to 986; it reads VEV.

Belongs to the protein kinase superfamily. Tyr protein kinase family. Ephrin receptor subfamily. In terms of assembly, heterotetramer upon binding of the ligand. The heterotetramer is composed of an ephrin dimer and a receptor dimer. Interacts (via PDZ-binding motif) with GRIP1 and PICK1 (via PDZ domain). Interacts with ARHGEF15; mediates ARHGEF15 phosphorylation, ubiquitination and degradation by the proteasome. Interacts with AQP1; involved in endolymph production in the inner ear. Interacts with EFNA5. Interacts with SPSB1. Interacts with SPSB4. Interacts with SH2D3C. Autophosphorylated; ligand binding stimulates autophosphorylation on tyrosine residues. Post-translationally, ligand binding induces cleavage by matrix metalloproteinases (MMPs) such as MMP7/MMP9, producing an EphB2/N-terminal fragment (NTF) and a C-terminal long fragment (EphB2-LF). EphB2-LF is further cleaved by MMPs, producing EphB2/CTF1 which is further cleaved by the PS1/gamma-secretase producing EphB2/CTF2. In terms of processing, polyubiquitinated; ligand binding stimulates ubiquitination. Ubiquitinated by RNF186 at Lys-891, mainly through 'Lys-27'-linked polyubiquitin chains. Ubiquitinated by CRL2(KLHDC2) E3 ligase complex. Expressed in the epithelial dark cells of the inner ear. Expressed in the region of the proximal tubules of the kidney nephron. Expressed in myogenic progenitor cells.

Its subcellular location is the cell membrane. It localises to the cell projection. The protein localises to the axon. The protein resides in the dendrite. The catalysed reaction is L-tyrosyl-[protein] + ATP = O-phospho-L-tyrosyl-[protein] + ADP + H(+). In terms of biological role, receptor tyrosine kinase which binds promiscuously transmembrane ephrin-B family ligands residing on adjacent cells, leading to contact-dependent bidirectional signaling into neighboring cells. The signaling pathway downstream of the receptor is referred to as forward signaling while the signaling pathway downstream of the ephrin ligand is referred to as reverse signaling. Functions in axon guidance during development. Involved in the guidance of commissural axons, that form a major interhemispheric connection between the 2 temporal lobes of the cerebral cortex. Also involved in guidance of contralateral inner ear efferent growth cones at the midline and of retinal ganglion cell axons to the optic disk. In addition to axon guidance, also regulates dendritic spines development and maturation and stimulates the formation of excitatory synapses. Upon activation by EFNB1, abolishes the ARHGEF15-mediated negative regulation on excitatory synapse formation. Controls other aspects of development including angiogenesis, palate development and in inner ear development through regulation of endolymph production. Forward and reverse signaling through the EFNB2/EPHB2 complex regulate movement and adhesion of cells that tubularize the urethra and septate the cloaca. May function as a tumor suppressor. May be involved in the regulation of platelet activation and blood coagulation. The protein is Ephrin type-B receptor 2 of Mus musculus (Mouse).